The sequence spans 176 residues: MVAIKNLFLLAATAVSVLAAPSPLDARATWTCINQQLNPKTNKWEDKRLLYSQAKAESNSHHAPLSDGKTGSSYPHWFTNGYDGNGKLIKGRTPIKFGKADCDRPPKHSQNGMGKDDHYLLEFPTFPDGHDYKFDSKKPKEDPGPARVIYTYPNKVFCGIVAHQRGNQGDLRLCSH.

The first 27 residues, 1-27, serve as a signal peptide directing secretion; the sequence is MVAIKNLFLLAATAVSVLAAPSPLDAR. 2 disulfide bridges follow: Cys-32/Cys-174 and Cys-102/Cys-158. Residue His-76 is part of the active site. Catalysis depends on Glu-122, which acts as the Proton acceptor. The active-site Proton donor is the His-163.

This sequence belongs to the ribonuclease U2 family.

The protein resides in the secreted. In terms of biological role, this purine-specific ribonuclease cleaves 28S RNA in eukaryotic ribosomes, inhibits protein synthesis, and shows antitumor activity. The sequence is that of Ribonuclease mitogillin (mitF) from Aspergillus fumigatus (strain ATCC MYA-4609 / CBS 101355 / FGSC A1100 / Af293) (Neosartorya fumigata).